We begin with the raw amino-acid sequence, 420 residues long: RING finger protein 39 (420 aa).

An RING-type zinc finger spans residues cysteine 88–glycine 135. The B30.2/SPRY domain maps to aspartate 210–serine 420. The tract at residues aspartate 246 to lysine 265 is disordered.

The protein resides in the cytoplasm. The enzyme catalyses S-ubiquitinyl-[E2 ubiquitin-conjugating enzyme]-L-cysteine + [acceptor protein]-L-lysine = [E2 ubiquitin-conjugating enzyme]-L-cysteine + N(6)-ubiquitinyl-[acceptor protein]-L-lysine.. It functions in the pathway protein modification; protein ubiquitination. Its function is as follows. Plays an inhibitory role in anti-RNA viral innate immunity by targeting the adapter DDX3X and promoting its 'Lys-48'-linked polyubiquitination. Alternatively, enhances the cGAS-STING pathway activation by promoting 'Lys-63'-linked ubiquitination of STING1, facilitating the STING1-TBK1 complex formation and STING1 activation. The chain is RING finger protein 39 (RNF39) from Pan troglodytes (Chimpanzee).